The sequence spans 102 residues: RNA-binding protein Hfq (102 aa).

One can recognise a Sm domain in the interval 9 to 68; the sequence is DPFLNALRRERVPVSIYLVNGIKLQGQIESFDQFVILLKNTVSQMVYKHAISTVVPSRPV. The segment at 63 to 102 is disordered; it reads VPSRPVSHHSNNAGGGTSSNYHHGSSAQGTSAQQDSEETE. Polar residues predominate over residues 70–96; that stretch reads HHSNNAGGGTSSNYHHGSSAQGTSAQQ.

The protein belongs to the Hfq family. Homohexamer.

Its function is as follows. RNA chaperone that binds small regulatory RNA (sRNAs) and mRNAs to facilitate mRNA translational regulation in response to envelope stress, environmental stress and changes in metabolite concentrations. Also binds with high specificity to tRNAs. In Citrobacter koseri (strain ATCC BAA-895 / CDC 4225-83 / SGSC4696), this protein is RNA-binding protein Hfq.